A 119-amino-acid chain; its full sequence is Large ribosomal subunit protein bL19 (119 aa).

It belongs to the bacterial ribosomal protein bL19 family.

This protein is located at the 30S-50S ribosomal subunit interface and may play a role in the structure and function of the aminoacyl-tRNA binding site. This chain is Large ribosomal subunit protein bL19, found in Saccharopolyspora erythraea (strain ATCC 11635 / DSM 40517 / JCM 4748 / NBRC 13426 / NCIMB 8594 / NRRL 2338).